A 361-amino-acid chain; its full sequence is Probable cinnamyl alcohol dehydrogenase (361 aa).

Residue cysteine 48 coordinates Zn(2+). Threonine 50 serves as a coordination point for NADP(+). Residues histidine 70, glutamate 71, cysteine 101, cysteine 104, cysteine 107, cysteine 115, and cysteine 164 each coordinate Zn(2+). NADP(+) is bound by residues threonine 168, 189-194 (GLGGVG), 212-217 (SSSDKK), threonine 252, glycine 276, and 299-301 (SFI).

It belongs to the zinc-containing alcohol dehydrogenase family. In terms of assembly, homodimer. Requires Zn(2+) as cofactor.

The enzyme catalyses (E)-cinnamyl alcohol + NADP(+) = (E)-cinnamaldehyde + NADPH + H(+). The catalysed reaction is (E)-coniferol + NADP(+) = (E)-coniferaldehyde + NADPH + H(+). It carries out the reaction (E)-sinapyl alcohol + NADP(+) = (E)-sinapaldehyde + NADPH + H(+). It catalyses the reaction (E)-4-coumaroyl alcohol + NADP(+) = (E)-4-coumaraldehyde + NADPH + H(+). The enzyme catalyses (E)-caffeyl alcohol + NADP(+) = (E)-caffeyl aldehyde + NADPH + H(+). Its pathway is aromatic compound metabolism; phenylpropanoid biosynthesis. Involved in lignin biosynthesis. Catalyzes the final step specific for the production of lignin monomers. Catalyzes the NADPH-dependent reduction of coniferaldehyde, 5-hydroxyconiferaldehyde, sinapaldehyde, 4-coumaraldehyde and caffeyl aldehyde to their respective alcohols. The sequence is that of Probable cinnamyl alcohol dehydrogenase from Lolium perenne (Perennial ryegrass).